The sequence spans 221 residues: Lipoprotein-releasing system ATP-binding protein LolD (221 aa).

The ABC transporter domain maps to 8–220; the sequence is LKMISKHYKQ…YNLKHGLLNI (213 aa). 42–49 provides a ligand contact to ATP; it reads GSSGSGKS.

The protein belongs to the ABC transporter superfamily. Lipoprotein translocase (TC 3.A.1.125) family. In terms of assembly, the complex is composed of two ATP-binding proteins (LolD) and two transmembrane proteins (LolC and LolE).

The protein localises to the cell inner membrane. Functionally, part of the ABC transporter complex LolCDE involved in the translocation of mature outer membrane-directed lipoproteins, from the inner membrane to the periplasmic chaperone, LolA. Responsible for the formation of the LolA-lipoprotein complex in an ATP-dependent manner. This is Lipoprotein-releasing system ATP-binding protein LolD from Rickettsia prowazekii (strain Madrid E).